Reading from the N-terminus, the 812-residue chain is Axin-2 (812 aa).

The segment at 1–43 is disordered; the sequence is MNRTLTDPMVSSFREDDPRPPVPGEEGETTCHHPSKLAMMRPK. Residues 84-203 enclose the RGS domain; that stretch reads SLHFLLGDQD…LTSDIYLEYV (120 aa). Disordered stretches follow at residues 275 to 326, 388 to 430, 446 to 484, and 609 to 726; these read SYRR…AIPP, ETMS…TCEE, TPGC…SSMN, and RQTK…SGCH. The span at 285-303 shows a compositional bias: polar residues; sequence NRFTSGYSFAPATSANDSE. The span at 305 to 323 shows a compositional bias: low complexity; it reads SSDALTDDSMSMTDSSVDA. The segment at 329-415 is interaction with GSK3B; the sequence is LGSKKQLQRE…RDESEMSSSS (87 aa). Residues 388 to 397 show a composition bias toward basic and acidic residues; that stretch reads ETMSSLEERL. Positions 401–410 are enriched in acidic residues; it reads QEEEERDESE. A compositionally biased stretch (low complexity) spans 411 to 421; the sequence is MSSSSASHSLP. An interaction with beta-catenin region spans residues 415–467; the sequence is SASHSLPLLPPGTCEEDPQAILDEHLSRVLKTPGCQSPGLLRHSPRSRSPEQR. The span at 475–484 shows a compositional bias: polar residues; that stretch reads STRSQSSSMN. A compositionally biased stretch (basic and acidic residues) spans 672–683; sequence EEARRRLEEVSK. The region spanning 730–812 is the DIX domain; sequence GSETVVTYFF…KILGKVDRMD (83 aa).

Interacts with hwa; leading to promote the tankyrase-mediated degradation of axin1. Post-translationally, ADP-ribosylated by tankyrase tnks and tnks2. Poly-ADP-ribosylated protein is recognized by rnf146, followed by ubiquitination and subsequent activation of the Wnt signaling pathway. Ubiquitinated by rnf146 when poly-ADP-ribosylated, leading to its degradation and subsequent activation of the Wnt signaling pathway.

Its subcellular location is the cytoplasm. Functionally, component of the beta-catenin destruction complex required for regulating ctnnb1 levels through phosphorylation and ubiquitination, and modulating Wnt-signaling. Controls dorsoventral patterning by down-regulating ctnnb1 to inhibit the Wnt signaling pathway and ventralize embryos. In Danio rerio (Zebrafish), this protein is Axin-2 (axin2).